A 415-amino-acid chain; its full sequence is Mitochondrial tRNA-specific 2-thiouridylase 1 (415 aa).

Residues 37-44 (AMSGGVDS) and M63 each bind ATP. The tract at residues 124-126 (NPD) is interaction with target base in tRNA. C129 functions as the Nucleophile in the catalytic mechanism. C129 and C234 are oxidised to a cystine. Position 159 (G159) interacts with ATP. The segment at 183–185 (KDQ) is interaction with tRNA. Residue C234 is the Cysteine persulfide intermediate of the active site. The interval 356 to 357 (RH) is interaction with tRNA.

The protein belongs to the MnmA/TRMU family.

The protein localises to the mitochondrion. It catalyses the reaction 5-taurinomethyluridine(34) in tRNA + S-sulfanyl-L-cysteinyl-[protein] + AH2 + ATP = 5-taurinomethyl-2-thiouridine(34) in tRNA + L-cysteinyl-[protein] + A + AMP + diphosphate + H(+). Catalyzes the 2-thiolation of uridine at the wobble position (U34) of mitochondrial tRNA(Lys), tRNA(Glu) and tRNA(Gln). Required for the formation of 5-taurinomethyl-2-thiouridine (tm5s2U) of mitochondrial tRNA(Lys), tRNA(Glu), and tRNA(Gln) at the wobble position. ATP is required to activate the C2 atom of the wobble base. This Schizosaccharomyces pombe (strain 972 / ATCC 24843) (Fission yeast) protein is Mitochondrial tRNA-specific 2-thiouridylase 1.